The primary structure comprises 666 residues: Protein scarlet (666 aa).

At 1–417 (MSDSDSKRID…TIQWLRFIQK (417 aa)) the chain is on the cytoplasmic side. Positions 26-55 (PVGSTIEVPSLDSTPKLSKRNSSERSLPLR) are disordered. The ABC transporter domain occupies 69-316 (LVWRDLCVYT…FANHGYYCPE (248 aa)). 108–115 (GSSGSGKT) contributes to the ATP binding site. A helical transmembrane segment spans residues 418-438 (IAMAFIIGACFAGTTEPSQLG). Residues 439–444 (VQAVQG) lie on the Extracellular side of the membrane. The helical transmembrane segment at 445–465 (ALFIMISENTYHPMYSVLNLF) threads the bilayer. Over 466 to 490 (PQGFPLFMRETRSGLYSTGQYYAAN) the chain is Cytoplasmic. A helical transmembrane segment spans residues 491–511 (ILALLPGMIIEPLIFVIICYW). At 512–518 (LTGLRST) the chain is on the extracellular side. A helical transmembrane segment spans residues 519-539 (FYAFGVTAMCVVLVMNVATAC). Topologically, residues 540–551 (GCFFSTAFNSVP) are cytoplasmic. A helical transmembrane segment spans residues 552–572 (LAMAYLVPLDYIFMITSGIFI). Over 573-639 (QVNSLPVAFW…YSFNESNVYR (67 aa)) the chain is Extracellular. N-linked (GlcNAc...) asparagine glycans are attached at residues Asn-607 and Asn-633. The helical transmembrane segment at 640 to 660 (NLLAMVGLYFGFHLLGYYCLW) threads the bilayer. The Cytoplasmic portion of the chain corresponds to 661–666 (RRARKL).

Belongs to the ABC transporter superfamily. ABCG family. Eye pigment precursor importer (TC 3.A.1.204) subfamily. In terms of assembly, may form a heterodimer with w/white. Expressed in the eye, specifically in primary pigment cells, secondary pigment cells and retinula cells (at protein level).

It is found in the cytoplasmic vesicle membrane. It catalyses the reaction L-kynurenine(out) + ATP + H2O = L-kynurenine(in) + ADP + phosphate + H(+). In terms of biological role, ATP-dependent transporter of the ATP-binding cassette (ABC) family which transports various molecules including bioamines, neurotransmitters and metabolic intermediates. In the eye and probably in association with w/white, required for the transport of the eye brown pigment precursors, kynurenine and probably tryptophan, into pigment cell granules. In Malpighian tubules and pupal eyes, involved in kynurenine transport. Probably in association with w/white, plays a role in zinc storage granule biogenesis in Malpighian tubule principal epithelial cells. This is Protein scarlet from Drosophila melanogaster (Fruit fly).